Consider the following 589-residue polypeptide: uncharacterized protein (589 aa).

Disordered regions lie at residues 328–365 (LSST…EDGP), 379–459 (SLLG…DPSN), 525–555 (RSTS…GAVK), and 569–589 (VRGT…SRDM). A compositionally biased stretch (polar residues) spans 398–425 (VSLSSASTSARPTQRRSSLTPCSQTPQE). Basic and acidic residues predominate over residues 426-445 (THQHAREALTTRMESQREAN). Positions 536–545 (QGDDDDEEDG) are enriched in acidic residues.

This is an uncharacterized protein from Mycosarcoma maydis (Corn smut fungus).